Here is a 194-residue protein sequence, read N- to C-terminus: Protein phosphatase 1 regulatory subunit 1B (194 aa).

An N-acetylmethionine modification is found at M1. The disordered stretch occupies residues 1–194 (MDPKDRKKIQ…GEEPQHPSPP (194 aa)). At T34 the chain carries Phosphothreonine; by PKA. Positions 41-63 (VSEHSSPEEEASPHQRTSGEGHH) are enriched in basic and acidic residues. Phosphoserine occurs at positions 45 and 46. A Phosphothreonine modification is found at T75. The segment covering 84–95 (HLQTISNLSENQ) has biased composition (polar residues). 2 positions are modified to phosphoserine: S97 and S130. The segment covering 113–131 (QEDDEEDEDEEEDEEEDSQ) has biased composition (acidic residues). Residues 160–170 (PPLDEPQRDGN) show a composition bias toward basic and acidic residues. A Phosphoserine modification is found at S192.

It belongs to the protein phosphatase inhibitor 1 family. Post-translationally, dopamine- and cyclic AMP-regulated neuronal phosphoprotein. Phosphorylation of Thr-34 is required for activity.

The protein localises to the cytoplasm. Functionally, inhibitor of protein-phosphatase 1. This chain is Protein phosphatase 1 regulatory subunit 1B (Ppp1r1b), found in Mus musculus (Mouse).